We begin with the raw amino-acid sequence, 198 residues long: Probable GTP-binding protein EngB (198 aa).

Residues 36–198 (SEPQFAFIGR…NLSKLQELLE (163 aa)) enclose the EngB-type G domain. GTP-binding positions include 44–51 (GRSNVGKS), 70–74 (GRTQL), 88–91 (DLPG), 155–158 (NKID), and 182–184 (ISA). The Mg(2+) site is built by Ser-51 and Thr-72.

This sequence belongs to the TRAFAC class TrmE-Era-EngA-EngB-Septin-like GTPase superfamily. EngB GTPase family. The cofactor is Mg(2+).

Functionally, necessary for normal cell division and for the maintenance of normal septation. In Mesomycoplasma hyopneumoniae (strain 232) (Mycoplasma hyopneumoniae), this protein is Probable GTP-binding protein EngB.